A 716-amino-acid polypeptide reads, in one-letter code: Fatty acid oxidation complex subunit alpha (716 aa).

Residues 1-189 (MIYQSPTIQV…KVGAVDAVVA (189 aa)) form an enoyl-CoA hydratase/isomerase region. Asp296 contributes to the substrate binding site. Residues 311–716 (KEVNNAAVLG…AANNGSYYQA (406 aa)) form a 3-hydroxyacyl-CoA dehydrogenase region. Residues Met324, Asp343, 400 to 402 (VVE), Lys407, and Ser429 each bind NAD(+). Residue His450 is the For 3-hydroxyacyl-CoA dehydrogenase activity of the active site. Asn453 lines the NAD(+) pocket. Positions 500 and 660 each coordinate substrate.

In the N-terminal section; belongs to the enoyl-CoA hydratase/isomerase family. This sequence in the C-terminal section; belongs to the 3-hydroxyacyl-CoA dehydrogenase family. Heterotetramer of two alpha chains (FadB) and two beta chains (FadA).

It carries out the reaction a (3S)-3-hydroxyacyl-CoA + NAD(+) = a 3-oxoacyl-CoA + NADH + H(+). The catalysed reaction is a (3S)-3-hydroxyacyl-CoA = a (2E)-enoyl-CoA + H2O. The enzyme catalyses a 4-saturated-(3S)-3-hydroxyacyl-CoA = a (3E)-enoyl-CoA + H2O. It catalyses the reaction (3S)-3-hydroxybutanoyl-CoA = (3R)-3-hydroxybutanoyl-CoA. It carries out the reaction a (3Z)-enoyl-CoA = a 4-saturated (2E)-enoyl-CoA. The catalysed reaction is a (3E)-enoyl-CoA = a 4-saturated (2E)-enoyl-CoA. Its pathway is lipid metabolism; fatty acid beta-oxidation. Functionally, involved in the aerobic and anaerobic degradation of long-chain fatty acids via beta-oxidation cycle. Catalyzes the formation of 3-oxoacyl-CoA from enoyl-CoA via L-3-hydroxyacyl-CoA. It can also use D-3-hydroxyacyl-CoA and cis-3-enoyl-CoA as substrate. This chain is Fatty acid oxidation complex subunit alpha, found in Shewanella baltica (strain OS195).